The primary structure comprises 383 residues: Adaptive-response sensory kinase SasA (383 aa).

The 214-residue stretch at 152 to 365 (MVAHELRTPL…CFTFTVPIWQ (214 aa)) folds into the Histidine kinase domain. H155 carries the post-translational modification Phosphohistidine; by autocatalysis.

As to quaternary structure, homooligomerizes. Interacts with KaiC. Participates in the KaiABC clock complex, whose core is composed of a KaiC homohexamer, 6 KaiB and up to 6 KaiA dimers. SasA and KaiB(fs) compete to bind to KaiC.

The catalysed reaction is ATP + protein L-histidine = ADP + protein N-phospho-L-histidine.. In terms of biological role, member of the two-component regulatory system SasA/RpaA involved in genome-wide circadian gene expression. One of several clock output pathways. Participates in the Kai clock protein complex, the main circadian regulator in cyanobacteria, via its interaction with KaiC. KaiC enhances the autophosphorylation activity of SasA, which then transfers its phosphate group to RpaA to activate it. In addition to its output function, recruits fold-shifted KaiB (KaiB(fs)) to KaiC to cooperatively form the KaiB(6):KaiC(6) complex (independent of SasA kinase activity). Required for robustness of the circadian rhythm of gene expression and is involved in clock output, also required for adaptation to light/dark cycles. The protein is Adaptive-response sensory kinase SasA of Parasynechococcus marenigrum (strain WH8102).